The chain runs to 267 residues: Octanoyltransferase (267 aa).

Residues 1-30 form a disordered region; the sequence is MPTGKLRQKPPYAAIMTNSPVTPSTETQQP. Residues 16 to 28 are compositionally biased toward polar residues; that stretch reads MTNSPVTPSTETQ. Residues 77–265 enclose the BPL/LPL catalytic domain; that stretch reads GTASELVWLV…AFESVFGPRQ (189 aa). Substrate-binding positions include 116 to 123, 196 to 198, and 209 to 211; these read RGGEYTYH, AIG, and GIA. The active-site Acyl-thioester intermediate is the C227.

This sequence belongs to the LipB family.

The protein resides in the cytoplasm. The catalysed reaction is octanoyl-[ACP] + L-lysyl-[protein] = N(6)-octanoyl-L-lysyl-[protein] + holo-[ACP] + H(+). The protein operates within protein modification; protein lipoylation via endogenous pathway; protein N(6)-(lipoyl)lysine from octanoyl-[acyl-carrier-protein]: step 1/2. Catalyzes the transfer of endogenously produced octanoic acid from octanoyl-acyl-carrier-protein onto the lipoyl domains of lipoate-dependent enzymes. Lipoyl-ACP can also act as a substrate although octanoyl-ACP is likely to be the physiological substrate. This Brucella abortus biovar 1 (strain 9-941) protein is Octanoyltransferase.